The chain runs to 350 residues: MGKLLKPIKDVGIVGYGAYVPMYRIRNEEIGRVWGISNFPIEEKAVPGLDEDAITIGIEAARNALKRAKIDPKDIRAIWFGSESKPYAVKPSSTVIAEAIGATPDLEAADFEFACKAGTEALQAAIGFVASGMAKYAMAIGADTAQGRPGDHLEFTAGAGGAAFIIGEKSSETVAYFEGSYSYVTDTPDFWRRQHEHYPRHGNRFTGEPAYFHHVVTAAKTLMDELGLTPEDFDYAVFHQPNVKFPLVAARMLGIPKEKVLPGLLSGRIGNTYSGATMVGISAVLDIAKPGDRILWVSFGSGAGSDAFSIVVQDAIEEKRNLAPKVEDYIKRRKVIDYALYAKARRKYII.

Residue Glu-83 is the Proton donor/acceptor of the active site. The active-site Acyl-thioester intermediate is the Cys-115. Cys-115 and Thr-156 together coordinate (3S)-3-hydroxy-3-methylglutaryl-CoA. Residue Arg-204 participates in CoA binding. (3S)-3-hydroxy-3-methylglutaryl-CoA contacts are provided by Thr-206 and His-239. His-239 acts as the Proton donor/acceptor in catalysis. Residue Lys-244 coordinates CoA. Positions 271 and 301 each coordinate (3S)-3-hydroxy-3-methylglutaryl-CoA.

It belongs to the thiolase-like superfamily. Archaeal HMG-CoA synthase family. Interacts with acetoacetyl-CoA thiolase that catalyzes the precedent step in the pathway and with a DUF35 protein. The acetoacetyl-CoA thiolase/HMG-CoA synthase complex channels the intermediate via a fused CoA-binding site, which allows for efficient coupling of the endergonic thiolase reaction with the exergonic HMGCS reaction.

The enzyme catalyses acetoacetyl-CoA + acetyl-CoA + H2O = (3S)-3-hydroxy-3-methylglutaryl-CoA + CoA + H(+). It participates in metabolic intermediate biosynthesis; (R)-mevalonate biosynthesis; (R)-mevalonate from acetyl-CoA: step 2/3. Functionally, catalyzes the condensation of acetyl-CoA with acetoacetyl-CoA to form 3-hydroxy-3-methylglutaryl-CoA (HMG-CoA). Functions in the mevalonate (MVA) pathway leading to isopentenyl diphosphate (IPP), a key precursor for the biosynthesis of isoprenoid compounds that are building blocks of archaeal membrane lipids. The polypeptide is Hydroxymethylglutaryl-CoA synthase (Pyrococcus horikoshii (strain ATCC 700860 / DSM 12428 / JCM 9974 / NBRC 100139 / OT-3)).